A 282-amino-acid chain; its full sequence is Pantothenate synthetase (282 aa).

30-37 (MGALHAGH) contributes to the ATP binding site. H37 acts as the Proton donor in catalysis. Q61 provides a ligand contact to (R)-pantoate. Q61 provides a ligand contact to beta-alanine. Position 147–150 (147–150 (GEKD)) interacts with ATP. Q153 contacts (R)-pantoate. Residues V176 and 184-187 (LSSR) contribute to the ATP site.

The protein belongs to the pantothenate synthetase family. Homodimer.

The protein localises to the cytoplasm. It catalyses the reaction (R)-pantoate + beta-alanine + ATP = (R)-pantothenate + AMP + diphosphate + H(+). It functions in the pathway cofactor biosynthesis; (R)-pantothenate biosynthesis; (R)-pantothenate from (R)-pantoate and beta-alanine: step 1/1. Its function is as follows. Catalyzes the condensation of pantoate with beta-alanine in an ATP-dependent reaction via a pantoyl-adenylate intermediate. In Bacteroides thetaiotaomicron (strain ATCC 29148 / DSM 2079 / JCM 5827 / CCUG 10774 / NCTC 10582 / VPI-5482 / E50), this protein is Pantothenate synthetase.